A 437-amino-acid chain; its full sequence is Phosphomethylpyrimidine synthase (437 aa).

Substrate is bound by residues Asn69, Met98, Tyr127, His163, 185–187 (SRG), 226–229 (DACR), and Glu265. His269 lines the Zn(2+) pocket. Position 292 (Tyr292) interacts with substrate. His333 provides a ligand contact to Zn(2+). 3 residues coordinate [4Fe-4S] cluster: Cys409, Cys412, and Cys416.

The protein belongs to the ThiC family. [4Fe-4S] cluster serves as cofactor.

It catalyses the reaction 5-amino-1-(5-phospho-beta-D-ribosyl)imidazole + S-adenosyl-L-methionine = 4-amino-2-methyl-5-(phosphooxymethyl)pyrimidine + CO + 5'-deoxyadenosine + formate + L-methionine + 3 H(+). The protein operates within cofactor biosynthesis; thiamine diphosphate biosynthesis. Catalyzes the synthesis of the hydroxymethylpyrimidine phosphate (HMP-P) moiety of thiamine from aminoimidazole ribotide (AIR) in a radical S-adenosyl-L-methionine (SAM)-dependent reaction. The chain is Phosphomethylpyrimidine synthase from Clostridium botulinum (strain 657 / Type Ba4).